A 649-amino-acid polypeptide reads, in one-letter code: PH and SEC7 domain-containing protein 1 (649 aa).

Disordered stretches follow at residues 1-22 and 57-161; these read MPHSGLLKSPVPFLPGTSPSAD and PGPT…LDST. Residues 70-88 show a composition bias toward pro residues; the sequence is PPQPPAPRPDPPAPAPLAP. Basic and acidic residues predominate over residues 120-132; that stretch reads PRKELPSPSHSED. The 195-residue stretch at 137 to 331 folds into the SEC7 domain; the sequence is GAAPLGSEPP…KALYSSIKNE (195 aa). Serine 345 is subject to Phosphoserine. Residues 381–494 enclose the PH domain; that stretch reads AVYKHGALVR…WITRINVVAA (114 aa). Coiled-coil stretches lie at residues 523-549 and 581-608; these read LSQEEQVRTHEAKLKAMASELREHRAA and AALLRVKMKAASEELDAIEAALAQAGST. Positions 601-649 are disordered; the sequence is ALAQAGSTEEGCPPPHSSPSLQPNPTSQPRAQRPGSEARAGAGSTRPKP. Over residues 618-630 the composition is skewed to polar residues; that stretch reads SPSLQPNPTSQPR.

It belongs to the PSD family. In terms of assembly, interacts with ACTN1. Interacts (ARF6-bound form) with KCNK1; does not interact with KCNK1 in the absence of ARF6. In terms of tissue distribution, brain. Expressed in the hippocampal and dentate neuronal layers, cerebellar cortex, molecular layer of the hippocampus and dentate gyrus.

Its subcellular location is the cell membrane. It is found in the cell projection. It localises to the ruffle membrane. The protein resides in the cleavage furrow. Its function is as follows. Guanine nucleotide exchange factor for ARF6. Induces cytoskeletal remodeling. The chain is PH and SEC7 domain-containing protein 1 (Psd) from Rattus norvegicus (Rat).